Reading from the N-terminus, the 481-residue chain is UDP-glycosyltransferase 73B3 (481 aa).

Residue histidine 21 is the Proton acceptor of the active site. Histidine 21 provides a ligand contact to an anthocyanidin. Aspartate 132 acts as the Charge relay in catalysis. 7 residues coordinate UDP-alpha-D-glucose: alanine 355, glutamine 357, histidine 372, tryptophan 375, asparagine 376, serine 377, and glutamate 380. Alanine 395 contacts an anthocyanidin. Residues glutamate 396 and glutamine 397 each coordinate UDP-alpha-D-glucose.

Belongs to the UDP-glycosyltransferase family. As to expression, expressed in roots and flowers.

It catalyses the reaction a flavonol + UDP-alpha-D-glucose = a flavonol 3-O-beta-D-glucoside + UDP + H(+). Its function is as follows. Possesses quercetin 3-O-glucosyltransferase activity in vitro. Also active in vitro on benzoates and benzoate derivatives. Involved in stress or defense responses. The polypeptide is UDP-glycosyltransferase 73B3 (UGT73B3) (Arabidopsis thaliana (Mouse-ear cress)).